Consider the following 72-residue polypeptide: MKKLMLAIFISVLSFPSFSQSTESLDSSKEKITLETKKCDVVKNNSEKKSENMNNTFYCCELCCNPACAGCY.

Residues 1–19 (MKKLMLAIFISVLSFPSFS) form the signal peptide. A propeptide spanning residues 20–54 (QSTESLDSSKEKITLETKKCDVVKNNSEKKSENMN) is cleaved from the precursor. 3 disulfide bridges follow: cysteine 59–cysteine 64, cysteine 60–cysteine 68, and cysteine 63–cysteine 71.

This sequence belongs to the heat-stable enterotoxin family.

Its subcellular location is the secreted. Functionally, toxin which activates the particulate form of guanylate cyclase and increases cyclic GMP levels within the host intestinal epithelial cells. This chain is Heat-stable enterotoxin ST-IA/ST-P (sta1), found in Escherichia coli.